The primary structure comprises 119 residues: HTH-type transcriptional regulator SarX (119 aa).

Positions 55–78 (LKTAMDELDLSRTKLLVSIRRLIE) form a DNA-binding region, H-T-H motif.

The protein belongs to the SarA family.

Its subcellular location is the cytoplasm. Its function is as follows. Involved in the regulation of virulence genes. Acts as a repressor of the agr locus and consequently targets genes regulated by the agr system such as sspA, hla and hlb. Binds directly to the agr promoter region. The sequence is that of HTH-type transcriptional regulator SarX (sarX) from Staphylococcus aureus (strain USA300).